The primary structure comprises 492 residues: 6-phosphogluconate dehydrogenase, decarboxylating (492 aa).

NADP(+) is bound by residues 13-18 (GLAVMG), 36-38 (NRT), 78-80 (VKA), and N106. N106 contributes to the substrate binding site. S107 carries the post-translational modification Phosphoserine. 132-134 (SGG) serves as a coordination point for substrate. K187 acts as the Proton acceptor in catalysis. Residue 190–191 (HN) participates in substrate binding. Residue E194 is the Proton donor of the active site. Y195 lines the substrate pocket. Residue S215 is modified to Phosphoserine. Substrate is bound by residues K264, R291, R449, and H455.

It belongs to the 6-phosphogluconate dehydrogenase family. As to quaternary structure, homodimer.

The enzyme catalyses 6-phospho-D-gluconate + NADP(+) = D-ribulose 5-phosphate + CO2 + NADPH. It participates in carbohydrate degradation; pentose phosphate pathway; D-ribulose 5-phosphate from D-glucose 6-phosphate (oxidative stage): step 3/3. In terms of biological role, catalyzes the oxidative decarboxylation of 6-phosphogluconate to ribulose 5-phosphate and CO(2), with concomitant reduction of NADP to NADPH. This is 6-phosphogluconate dehydrogenase, decarboxylating from Schizosaccharomyces pombe (strain 972 / ATCC 24843) (Fission yeast).